Here is a 264-residue protein sequence, read N- to C-terminus: Phosphatidylserine decarboxylase proenzyme (264 aa).

Catalysis depends on charge relay system; for autoendoproteolytic cleavage activity residues Asp-86, His-142, and Ser-226. Ser-226 (schiff-base intermediate with substrate; via pyruvic acid; for decarboxylase activity) is an active-site residue. Ser-226 carries the pyruvic acid (Ser); by autocatalysis modification.

Belongs to the phosphatidylserine decarboxylase family. PSD-B subfamily. Prokaryotic type I sub-subfamily. In terms of assembly, heterodimer of a large membrane-associated beta subunit and a small pyruvoyl-containing alpha subunit. The cofactor is pyruvate. In terms of processing, is synthesized initially as an inactive proenzyme. Formation of the active enzyme involves a self-maturation process in which the active site pyruvoyl group is generated from an internal serine residue via an autocatalytic post-translational modification. Two non-identical subunits are generated from the proenzyme in this reaction, and the pyruvate is formed at the N-terminus of the alpha chain, which is derived from the carboxyl end of the proenzyme. The autoendoproteolytic cleavage occurs by a canonical serine protease mechanism, in which the side chain hydroxyl group of the serine supplies its oxygen atom to form the C-terminus of the beta chain, while the remainder of the serine residue undergoes an oxidative deamination to produce ammonia and the pyruvoyl prosthetic group on the alpha chain. During this reaction, the Ser that is part of the protease active site of the proenzyme becomes the pyruvoyl prosthetic group, which constitutes an essential element of the active site of the mature decarboxylase.

The protein localises to the cell membrane. The catalysed reaction is a 1,2-diacyl-sn-glycero-3-phospho-L-serine + H(+) = a 1,2-diacyl-sn-glycero-3-phosphoethanolamine + CO2. The protein operates within phospholipid metabolism; phosphatidylethanolamine biosynthesis; phosphatidylethanolamine from CDP-diacylglycerol: step 2/2. In terms of biological role, catalyzes the formation of phosphatidylethanolamine (PtdEtn) from phosphatidylserine (PtdSer). The sequence is that of Phosphatidylserine decarboxylase proenzyme from Geobacillus kaustophilus (strain HTA426).